A 645-amino-acid chain; its full sequence is Cyclic nucleotide-gated channel rod photoreceptor subunit alpha (645 aa).

Residues 1 to 121 (MKVGVIETHH…PAGNMYYNWL (121 aa)) are Cytoplasmic-facing. The segment at 53 to 100 (NNNSNKDEEKKKKKEKKSKSENKKDGERQKNKEKKEKHKNKDKKKGKE) is disordered. The span at 70–86 (SKSENKKDGERQKNKEK) shows a compositional bias: basic and acidic residues. Residues 87–96 (KEKHKNKDKK) show a composition bias toward basic residues. A helical membrane pass occupies residues 122-143 (FCITMPVMYNWTMIIARACFDE). Over 144 to 153 (LQNDYLAVWF) the chain is Extracellular. Residues 154–174 (IVDYVSDVIYIADMFVRTRTG) traverse the membrane as a helical segment. The Cytoplasmic segment spans residues 175 to 199 (YLEQGLLVKEEQKLKEKYKSSLQFK). Residues 200 to 218 (LDFLSIIPTDLLYFKLGLN) form a helical membrane-spanning segment. Residues 219–223 (YPELR) are Extracellular-facing. Residues 224–242 (INRLLRVARMFEFFQRTET) form a helical membrane-spanning segment. The Cytoplasmic segment spans residues 243 to 249 (RTNYPNI). A helical membrane pass occupies residues 250-273 (FRISNLVMYIVIIIHWNACVYYSI). Over 274-296 (SKAIGFGADTWVYPNTSHPEFAR) the chain is Extracellular. A run of 2 helical transmembrane segments spans residues 297–331 (LTRK…FFVV) and 332–356 (VDFL…SNMN). Residues 357 to 645 (AARAEFQAKI…TDKPGVTKTE (289 aa)) lie on the Cytoplasmic side of the membrane. Residues 439-561 (LLVE…DGLL), Glu-498, and Arg-513 contribute to the 3',5'-cyclic GMP site.

It belongs to the cyclic nucleotide-gated cation channel (TC 1.A.1.5) family.

The protein resides in the membrane. Its function is as follows. Visual signal transduction is mediated by a G-protein coupled cascade using cGMP as second messenger. This protein can be activated by cGMP which leads to an opening of the cation channel and thereby causing a depolarization of rod photoreceptors. The polypeptide is Cyclic nucleotide-gated channel rod photoreceptor subunit alpha (Gallus gallus (Chicken)).